Here is a 1131-residue protein sequence, read N- to C-terminus: Kinesin-like protein CG14535 (1131 aa).

The span at 1 to 11 (MATTSTSNMSR) shows a compositional bias: polar residues. A disordered region spans residues 1–25 (MATTSTSNMSRNGGFCGALQRAPPP). The Kinesin motor domain occupies 44 to 396 (KVKVMLRVAD…IQIASRIHRL (353 aa)). 4 disordered regions span residues 472–494 (ALKG…MMMK), 693–753 (DLPD…SRDI), 905–926 (PAYR…QGSL), and 1016–1072 (TSSE…QRHR). Positions 483–494 (SKSASNSPMMMK) are enriched in low complexity. The segment covering 1016–1032 (TSSEAYDSGHDSNSTPR) has biased composition (polar residues).

The protein belongs to the TRAFAC class myosin-kinesin ATPase superfamily. Kinesin family. KIF26 subfamily.

It is found in the cytoplasm. The protein localises to the cytoskeleton. The chain is Kinesin-like protein CG14535 from Drosophila melanogaster (Fruit fly).